The following is a 464-amino-acid chain: MKNFAPSLALSLLLPTVQAQQTMWGQCGGAGWSGATDCVAGGVCSTQNAYYAQCLPGATTATTLSTTSKGTTTTTTSSTTSTGGGSSSTTTKTSTSAGPTVTGSPSGNPFSGYQQYANPYYSSEVHTLAIPSMTGALAVKASAVADVPSFVWLDVAAKVPTMGTYLENIRAKNKAGANPPVAGIFVVYDLPDRDCAALASNGEYAIADGGIAKYKAYIDAIRAQLLKYPDVHTILVIEPDSLANLITNINVAKCSGAKDAYLECINYALKQLNLPNVAMYIDAGHGGWLGWDANIGPAAEMYAKVYKDADAPAALRGLAVNVANYNAWTIDTCPSYTQGNKNCDEKRYIHALYPLLKAAGWDARFIMDTGRNGVQPTKQQAQGDWCNVIGTGFGIRPSSETGDDLLDAFVWVKPGAESDGTSDTTAARYDAHCGYTDALKPAPEAGQWFQAYFEQLLTNANPAF.

A signal peptide spans 1-19 (MKNFAPSLALSLLLPTVQA). The 36-residue stretch at 20-55 (QQTMWGQCGGAGWSGATDCVAGGVCSTQNAYYAQCL) folds into the CBM1 domain. Disulfide bonds link Cys27–Cys44 and Cys38–Cys54. Residues 59–102 (TTATTLSTTSKGTTTTTTSSTTSTGGGSSSTTTKTSTSAGPTVT) are thr-rich linker. Low complexity predominate over residues 65 to 100 (STTSKGTTTTTTSSTTSTGGGSSSTTTKTSTSAGPT). The tract at residues 65–108 (STTSKGTTTTTTSSTTSTGGGSSSTTTKTSTSAGPTVTGSPSGN) is disordered. Positions 103–464 (GSPSGNPFSG…QLLTNANPAF (362 aa)) are catalytic. Asp194 is an active-site residue. Intrachain disulfides connect Cys195–Cys254 and Cys386–Cys433. The Proton donor role is filled by Asp240. The Nucleophile role is filled by Asp419.

The protein belongs to the glycosyl hydrolase 6 (cellulase B) family.

Its subcellular location is the secreted. It catalyses the reaction Hydrolysis of (1-&gt;4)-beta-D-glucosidic linkages in cellulose and cellotetraose, releasing cellobiose from the non-reducing ends of the chains.. In terms of biological role, the biological conversion of cellulose to glucose generally requires three types of hydrolytic enzymes: (1) Endoglucanases which cut internal beta-1,4-glucosidic bonds; (2) Exocellobiohydrolases that cut the disaccharide cellobiose from the non-reducing end of the cellulose polymer chain; (3) Beta-1,4-glucosidases which hydrolyze the cellobiose and other short cello-oligosaccharides to glucose. The chain is Probable 1,4-beta-D-glucan cellobiohydrolase C (cbhC) from Aspergillus clavatus (strain ATCC 1007 / CBS 513.65 / DSM 816 / NCTC 3887 / NRRL 1 / QM 1276 / 107).